Consider the following 154-residue polypeptide: Sperm microtubule associated protein 1 (154 aa).

This is Sperm microtubule associated protein 1 from Homo sapiens (Human).